Reading from the N-terminus, the 74-residue chain is Large ribosomal subunit protein bL31 (74 aa).

C16, C18, C38, and C41 together coordinate Zn(2+).

This sequence belongs to the bacterial ribosomal protein bL31 family. Type A subfamily. Part of the 50S ribosomal subunit. Requires Zn(2+) as cofactor.

Functionally, binds the 23S rRNA. This chain is Large ribosomal subunit protein bL31, found in Mycobacteroides abscessus (strain ATCC 19977 / DSM 44196 / CCUG 20993 / CIP 104536 / JCM 13569 / NCTC 13031 / TMC 1543 / L948) (Mycobacterium abscessus).